The following is a 122-amino-acid chain: UPF0344 protein BPUM_1008 (122 aa).

Transmembrane regions (helical) follow at residues 5 to 25 (LHIT…ALAG), 33 to 53 (IVHM…VELY), 60 to 80 (IPGF…VIGF), and 93 to 113 (SVTG…LLGL).

The protein belongs to the UPF0344 family.

The protein localises to the cell membrane. The protein is UPF0344 protein BPUM_1008 of Bacillus pumilus (strain SAFR-032).